The chain runs to 363 residues: Phosphoserine aminotransferase (363 aa).

Arg-42 is a binding site for L-glutamate. Trp-105, Thr-155, Asp-175, and Gln-198 together coordinate pyridoxal 5'-phosphate. Lys-199 is subject to N6-(pyridoxal phosphate)lysine. A pyridoxal 5'-phosphate-binding site is contributed by 240 to 241 (NT).

Belongs to the class-V pyridoxal-phosphate-dependent aminotransferase family. SerC subfamily. As to quaternary structure, homodimer. It depends on pyridoxal 5'-phosphate as a cofactor.

It is found in the cytoplasm. The enzyme catalyses O-phospho-L-serine + 2-oxoglutarate = 3-phosphooxypyruvate + L-glutamate. It carries out the reaction 4-(phosphooxy)-L-threonine + 2-oxoglutarate = (R)-3-hydroxy-2-oxo-4-phosphooxybutanoate + L-glutamate. Its pathway is amino-acid biosynthesis; L-serine biosynthesis; L-serine from 3-phospho-D-glycerate: step 2/3. It functions in the pathway cofactor biosynthesis; pyridoxine 5'-phosphate biosynthesis; pyridoxine 5'-phosphate from D-erythrose 4-phosphate: step 3/5. Its function is as follows. Catalyzes the reversible conversion of 3-phosphohydroxypyruvate to phosphoserine and of 3-hydroxy-2-oxo-4-phosphonooxybutanoate to phosphohydroxythreonine. The chain is Phosphoserine aminotransferase from Herminiimonas arsenicoxydans.